The chain runs to 172 residues: DNA-directed RNA polymerase II subunit rpb7 (172 aa).

The protein belongs to the eukaryotic RPB7/RPC8 RNA polymerase subunit family. As to quaternary structure, component of the RNA polymerase II (Pol II) complex consisting of 12 subunits. RPB4 and RPB7 form a subcomplex that protrudes from the 10-subunit Pol II core complex.

The protein localises to the nucleus. Functionally, DNA-dependent RNA polymerase catalyzes the transcription of DNA into RNA using the four ribonucleoside triphosphates as substrates. Component of RNA polymerase II which synthesizes mRNA precursors and many functional non-coding RNAs. Pol II is the central component of the basal RNA polymerase II transcription machinery. It is composed of mobile elements that move relative to each other. RPB7 is part of a subcomplex with RPB4 that binds to a pocket formed by RPB1, RPB2 and RPB6 at the base of the clamp element. The RPB4-RPB7 subcomplex seems to lock the clamp via RPB7 in the closed conformation thus preventing double-stranded DNA to enter the active site cleft. The RPB4-RPB7 subcomplex binds single-stranded DNA and RNA. In Dictyostelium discoideum (Social amoeba), this protein is DNA-directed RNA polymerase II subunit rpb7 (polr2g).